The following is a 375-amino-acid chain: tRNA/tmRNA (uracil-C(5))-methyltransferase (375 aa).

Q197, Y225, N230, E246, and D306 together coordinate S-adenosyl-L-methionine. C331 serves as the catalytic Nucleophile. The Proton acceptor role is filled by E365.

Belongs to the class I-like SAM-binding methyltransferase superfamily. RNA M5U methyltransferase family. TrmA subfamily.

The enzyme catalyses uridine(54) in tRNA + S-adenosyl-L-methionine = 5-methyluridine(54) in tRNA + S-adenosyl-L-homocysteine + H(+). It catalyses the reaction uridine(341) in tmRNA + S-adenosyl-L-methionine = 5-methyluridine(341) in tmRNA + S-adenosyl-L-homocysteine + H(+). Its function is as follows. Dual-specificity methyltransferase that catalyzes the formation of 5-methyluridine at position 54 (m5U54) in all tRNAs, and that of position 341 (m5U341) in tmRNA (transfer-mRNA). In Aliarcobacter butzleri (strain RM4018) (Arcobacter butzleri), this protein is tRNA/tmRNA (uracil-C(5))-methyltransferase.